The following is an 803-amino-acid chain: Translation initiation factor IF-2 (803 aa).

The segment covering 65–75 (PDKVEEKKEHT) has biased composition (basic and acidic residues). The disordered stretch occupies residues 65–186 (PDKVEEKKEH…PKSRKSKTLK (122 aa)). Residues 175 to 185 (NKPKSRKSKTL) are compositionally biased toward basic residues. The region spanning 300–468 (IRPPVVTIMG…ILLTADAALE (169 aa)) is the tr-type G domain. The tract at residues 309–316 (GHVDHGKT) is G1. 309–316 (GHVDHGKT) is a GTP binding site. Positions 334-338 (GITQH) are G2. The G3 stretch occupies residues 355 to 358 (DTPG). GTP is bound by residues 355-359 (DTPGH) and 409-412 (NKID). The tract at residues 409–412 (NKID) is G4. The tract at residues 445–447 (SAK) is G5.

This sequence belongs to the TRAFAC class translation factor GTPase superfamily. Classic translation factor GTPase family. IF-2 subfamily.

Its subcellular location is the cytoplasm. One of the essential components for the initiation of protein synthesis. Protects formylmethionyl-tRNA from spontaneous hydrolysis and promotes its binding to the 30S ribosomal subunits. Also involved in the hydrolysis of GTP during the formation of the 70S ribosomal complex. The protein is Translation initiation factor IF-2 of Tropheryma whipplei (strain Twist) (Whipple's bacillus).